Here is a 282-residue protein sequence, read N- to C-terminus: Nucleotide-binding protein ABO_0549 (282 aa).

8–15 (GRSGSGKT) contacts ATP. Residue 59–62 (DARN) participates in GTP binding.

This sequence belongs to the RapZ-like family.

Functionally, displays ATPase and GTPase activities. This chain is Nucleotide-binding protein ABO_0549, found in Alcanivorax borkumensis (strain ATCC 700651 / DSM 11573 / NCIMB 13689 / SK2).